Consider the following 387-residue polypeptide: Cysteine desulfurase (387 aa).

Residues 72–73 (GT), Asn152, Gln180, and 200–202 (SAH) contribute to the pyridoxal 5'-phosphate site. An N6-(pyridoxal phosphate)lysine modification is found at Lys203. Thr238 contacts pyridoxal 5'-phosphate. Cys326 functions as the Cysteine persulfide intermediate in the catalytic mechanism. A [2Fe-2S] cluster-binding site is contributed by Cys326.

This sequence belongs to the class-V pyridoxal-phosphate-dependent aminotransferase family. NifS/IscS subfamily. As to quaternary structure, homodimer. Pyridoxal 5'-phosphate is required as a cofactor.

It catalyses the reaction (sulfur carrier)-H + L-cysteine = (sulfur carrier)-SH + L-alanine. Functionally, catalyzes the removal of elemental sulfur atoms from cysteine to produce alanine. Seems to participate in the biosynthesis of the nitrogenase metalloclusters by providing the inorganic sulfur required for the Fe-S core formation. The chain is Cysteine desulfurase from Sinorhizobium fredii (strain NBRC 101917 / NGR234).